The following is a 135-amino-acid chain: ATP synthase epsilon chain (135 aa).

Belongs to the ATPase epsilon chain family. As to quaternary structure, F-type ATPases have 2 components, CF(1) - the catalytic core - and CF(0) - the membrane proton channel. CF(1) has five subunits: alpha(3), beta(3), gamma(1), delta(1), epsilon(1). CF(0) has three main subunits: a, b and c.

It is found in the cell inner membrane. Produces ATP from ADP in the presence of a proton gradient across the membrane. The polypeptide is ATP synthase epsilon chain (Rhodopseudomonas palustris (strain BisA53)).